Here is a 772-residue protein sequence, read N- to C-terminus: Ion-translocating oxidoreductase complex subunit C (772 aa).

2 4Fe-4S ferredoxin-type domains span residues 369–397 (GEPQ…QQLY) and 407–436 (KATT…VQYF). 8 residues coordinate [4Fe-4S] cluster: Cys-377, Cys-380, Cys-383, Cys-387, Cys-416, Cys-419, Cys-422, and Cys-426. Disordered regions lie at residues 602-684 (KLEQ…DPRK), 696-717 (ARKL…PRKA), and 727-746 (KARK…QVDP). The span at 605-615 (QQQANAEPEQQ) shows a compositional bias: low complexity.

It belongs to the 4Fe4S bacterial-type ferredoxin family. RnfC subfamily. The complex is composed of six subunits: RsxA, RsxB, RsxC, RsxD, RsxE and RsxG. Requires [4Fe-4S] cluster as cofactor.

Its subcellular location is the cell inner membrane. Part of a membrane-bound complex that couples electron transfer with translocation of ions across the membrane. Required to maintain the reduced state of SoxR. This Escherichia coli O157:H7 (strain EC4115 / EHEC) protein is Ion-translocating oxidoreductase complex subunit C.